Here is a 131-residue protein sequence, read N- to C-terminus: Large ribosomal subunit protein bL17 (131 aa).

Belongs to the bacterial ribosomal protein bL17 family. Part of the 50S ribosomal subunit. Contacts protein L32.

In Thermotoga maritima (strain ATCC 43589 / DSM 3109 / JCM 10099 / NBRC 100826 / MSB8), this protein is Large ribosomal subunit protein bL17.